Here is an 852-residue protein sequence, read N- to C-terminus: MEQSKRVSMMREKFEAQSNEAESSPPPNRKPPPPNKRVQTNGTSSLNSSGSSFVSPSPSPSPSPQQPVKRPLPSPGVNKQAPPALPTQPRPQQQQPEIPVRPTTPTRTPPNLINSNGTSGGSGFSSSSGNSGYSSSNNNNSNSNSSINMNGNHSNGLNGGSSNPVPMRKVSSPINIANGTTPPPPPQPTPSQQPQQSPSSASHNNTQHNIPSPPPLPNNKPKKLAPTAVPAGLGSIIGGPKTPAISPGSTSPSLGSSNGNIPISTTSTPITPTPPISVPLATSPNNSHKDSISNSNSNNNNNNNNNNNNNSSNATTSPPSPPVSNVGNKQDEEKKGFLSIFTNKKKNKDKKKEFSVGSPFNVKHNIHVNYHSVTGFEGLPKEWEVILQSSGITREDVVEHSEVVIDVLDFHMQQQQQQAQQEQQALMQKQMQQSGIPAHMLNNPKPPTIPIRDANKQPHNQLQPTPHQPPQHHHQQQPPQQHHHQQQQQQHNNNNNNNNNNNNNNNNQQSAQQQSAGILSQQQEQQLEEMMCGGAYDDEQYDLNNQPLPDETNVSLYDLVSQEDPTKLFGEGSTKIGEGAAGEVFVVTQLKTNNKVAIKKMPLNQQNMKLIVTEIGIMKSCRHQNIIDYIDSYLVGDSLWVAMEFMGGGCLTEILEQFNSVKLVEAQIAYVCAETLKGLAYIHSQHRIHRDIKSDNILLGSDGSVKLADFGYAAQLTKSKQKRVTIVGTPYWMAPELIRGQNYDRKVDIWSLGIMAMEMAESEPPYMSFPPLRALFLITTKGIPDLKDQNKWSDDFKDFVKKCLDKDVENRPEAKVLLNHPFLKTACNSNGLVPAIMEAKKAKEAHSKFSIH.

Positions 1 to 334 are disordered; sequence MEQSKRVSMM…NVGNKQDEEK (334 aa). Serine 8 is modified (phosphoserine; by autocatalysis). The segment covering 24 to 35 has biased composition (pro residues); sequence SPPPNRKPPPPN. A compositionally biased stretch (low complexity) spans 44 to 56; it reads SSLNSSGSSFVSP. Residues 57–74 are compositionally biased toward pro residues; the sequence is SPSPSPSPQQPVKRPLPS. Low complexity-rich tracts occupy residues 90–117 and 124–163; these read RPQQ…NSNG and FSSS…GSSN. Residues 181–191 are compositionally biased toward pro residues; it reads TPPPPPQPTPS. Positions 201 to 210 are enriched in polar residues; it reads ASHNNTQHNI. Low complexity-rich tracts occupy residues 246–270 and 293–317; these read SPGS…STPI and SNSN…ATTS. Residues 356–369 form the CRIB domain; sequence VGSPFNVKHNIHVN. Over residues 419–433 the composition is skewed to low complexity; sequence AQQEQQALMQKQMQQ. The disordered stretch occupies residues 419–526; sequence AQQEQQALMQ…GILSQQQEQQ (108 aa). Positions 470–485 are enriched in basic residues; the sequence is PQHHHQQQPPQQHHHQ. A compositionally biased stretch (low complexity) spans 486 to 514; that stretch reads QQQQQHNNNNNNNNNNNNNNNNQQSAQQQ. In terms of domain architecture, Protein kinase spans 570-823; the sequence is GEGSTKIGEG…AKVLLNHPFL (254 aa). Residues 576–584 and lysine 599 contribute to the ATP site; that span reads IGEGAAGEV. The active-site Proton acceptor is aspartate 691.

Belongs to the protein kinase superfamily. STE Ser/Thr protein kinase family. STE20 subfamily. In terms of assembly, interacts with rac1A, rac1B, rac1C, racA, racB, racC and racF1. It depends on Mg(2+) as a cofactor. Autophosphorylated at Ser-8. This may stimulate interaction with GTP-bound Rac family members which then further stimulates autophosphorylation and kinase activity.

The protein localises to the membrane. Its subcellular location is the cytoplasm. It localises to the cytoskeleton. It carries out the reaction L-seryl-[protein] + ATP = O-phospho-L-seryl-[protein] + ADP + H(+). The catalysed reaction is L-threonyl-[protein] + ATP = O-phospho-L-threonyl-[protein] + ADP + H(+). Functionally, regulator of the myosin I component of the cytoskeleton: required for regulation of cytokinesis, phagocytosis and pinocytosis. The protein is Serine/threonine-protein kinase pakB of Dictyostelium discoideum (Social amoeba).